The following is a 545-amino-acid chain: Putative serine/threonine-protein kinase L673 (545 aa).

The Cyclin N-terminal domain maps to 13-125 (RLGLVNWMLN…YKVYYLTIWK (113 aa)). The Protein kinase domain maps to 264–543 (IDFQNKLGSG…NCLKKIKESF (280 aa)). ATP contacts are provided by residues 270–278 (LGSGTYGSV) and lysine 291. Catalysis depends on aspartate 384, which acts as the Proton acceptor.

Belongs to the protein kinase superfamily. Ser/Thr protein kinase family.

The enzyme catalyses L-seryl-[protein] + ATP = O-phospho-L-seryl-[protein] + ADP + H(+). It catalyses the reaction L-threonyl-[protein] + ATP = O-phospho-L-threonyl-[protein] + ADP + H(+). The sequence is that of Putative serine/threonine-protein kinase L673 from Acanthamoeba polyphaga (Amoeba).